The chain runs to 432 residues: Glutamyl-tRNA reductase (432 aa).

Residues 55-58 (TCNR), Ser114, 119-121 (ETQ), and Gln125 each bind substrate. Catalysis depends on Cys56, which acts as the Nucleophile. 194 to 199 (GAGEMI) serves as a coordination point for NADP(+).

This sequence belongs to the glutamyl-tRNA reductase family. Homodimer.

The enzyme catalyses (S)-4-amino-5-oxopentanoate + tRNA(Glu) + NADP(+) = L-glutamyl-tRNA(Glu) + NADPH + H(+). Its pathway is porphyrin-containing compound metabolism; protoporphyrin-IX biosynthesis; 5-aminolevulinate from L-glutamyl-tRNA(Glu): step 1/2. Its function is as follows. Catalyzes the NADPH-dependent reduction of glutamyl-tRNA(Glu) to glutamate 1-semialdehyde (GSA). In Burkholderia multivorans (strain ATCC 17616 / 249), this protein is Glutamyl-tRNA reductase.